We begin with the raw amino-acid sequence, 136 residues long: NADH-ubiquinone oxidoreductase chain 2 (136 aa).

Transmembrane regions (helical) follow at residues 12–32 (YFLI…NQSF), 34–54 (FLIP…MWLV), 74–94 (IGPL…WLMV), and 99–119 (FLLM…AVIL).

The protein belongs to the complex I subunit 2 family.

Its subcellular location is the mitochondrion inner membrane. The catalysed reaction is a ubiquinone + NADH + 5 H(+)(in) = a ubiquinol + NAD(+) + 4 H(+)(out). Core subunit of the mitochondrial membrane respiratory chain NADH dehydrogenase (Complex I) that is believed to belong to the minimal assembly required for catalysis. Complex I functions in the transfer of electrons from NADH to the respiratory chain. The immediate electron acceptor for the enzyme is believed to be ubiquinone. In Artemia salina (Brine shrimp), this protein is NADH-ubiquinone oxidoreductase chain 2 (ND2).